Consider the following 361-residue polypeptide: Aromatic amino acid aminotransferase (361 aa).

Lys-221 carries the post-translational modification N6-(pyridoxal phosphate)lysine.

Belongs to the class-II pyridoxal-phosphate-dependent aminotransferase family. As to quaternary structure, homodimer. The cofactor is pyridoxal 5'-phosphate.

The catalysed reaction is an aromatic L-alpha-amino acid + 2-oxoglutarate = an aromatic oxo-acid + L-glutamate. Aminotransferase that catalyzes the conversion of aromatic amino acids and 2-oxoglutarate into corresponding aromatic oxo acids and L-glutamate. This is Aromatic amino acid aminotransferase from Mycobacterium marinum (strain ATCC BAA-535 / M).